A 705-amino-acid chain; its full sequence is Polyribonucleotide nucleotidyltransferase (705 aa).

Positions 494 and 500 each coordinate Mg(2+). Residues 561-620 (PRITTVKVKPEKVRAVIGTGGKNIRQIVSETGVTIDVEDDGTVTIASSDMEASARAIAMV) form the KH domain. In terms of domain architecture, S1 motif spans 630–698 (GKIYRGTVKK…KQGKIRLSRK (69 aa)).

The protein belongs to the polyribonucleotide nucleotidyltransferase family. It depends on Mg(2+) as a cofactor.

It localises to the cytoplasm. It catalyses the reaction RNA(n+1) + phosphate = RNA(n) + a ribonucleoside 5'-diphosphate. Involved in mRNA degradation. Catalyzes the phosphorolysis of single-stranded polyribonucleotides processively in the 3'- to 5'-direction. This is Polyribonucleotide nucleotidyltransferase from Syntrophus aciditrophicus (strain SB).